The chain runs to 149 residues: MKTIEVKILDPRMQEQLPAYATAGSAGLDLRACLDAPITIKPGETHLVPTGLAIHLADPGYAAMILPRSGMGHKHGIVLGNLVGLIDSDYQGQLMVSTWNRGQTEFTLNPMERLAQLVIVPVLQVGFNVVEEFDTSERGIGGFGSTGKH.

Substrate contacts are provided by residues 68 to 70, Asn81, 85 to 87, and Met95; these read RSG and LID.

It belongs to the dUTPase family. It depends on Mg(2+) as a cofactor.

The enzyme catalyses dUTP + H2O = dUMP + diphosphate + H(+). The protein operates within pyrimidine metabolism; dUMP biosynthesis; dUMP from dCTP (dUTP route): step 2/2. This enzyme is involved in nucleotide metabolism: it produces dUMP, the immediate precursor of thymidine nucleotides and it decreases the intracellular concentration of dUTP so that uracil cannot be incorporated into DNA. This Janthinobacterium sp. (strain Marseille) (Minibacterium massiliensis) protein is Deoxyuridine 5'-triphosphate nucleotidohydrolase.